A 549-amino-acid polypeptide reads, in one-letter code: MFS-type transporter TwmF (549 aa).

4 helical membrane-spanning segments follow: residues 29–49 (IVIG…VLTI), 63–83 (NFIW…PLFG), 99–119 (VAIF…AMLI), and 126–146 (GVGS…LVPL). N-linked (GlcNAc...) asparagine glycosylation is present at N151. A run of 10 helical transmembrane segments spans residues 155-175 (ILMS…GAIV), 182-202 (WVFY…FIFL), 221-241 (LVGN…LSYA), 249-269 (SWHT…FAGL), 291-311 (IILA…LFFL), 328-348 (VALL…AIAL), 355-375 (KPVH…FTLF), 390-410 (IVAF…QAFI), 421-441 (AWYF…AAIF), and 502-522 (VSIA…DVGL).

This sequence belongs to the major facilitator superfamily.

It localises to the membrane. In terms of biological role, MFS efflux transporter; part of the gene cluster that mediates the biosynthesis of wortmanamides A and B, reduced long-chain polyketides amidated with a specific omega-amino acid, 5-aminopentanoic acid (5PA). This chain is MFS-type transporter TwmF, found in Talaromyces wortmannii (Penicillium wortmannii).